We begin with the raw amino-acid sequence, 205 residues long: Probable GTP-binding protein EngB (205 aa).

Positions 21–196 (QVPEVAFAGR…VHEVSKCVKE (176 aa)) constitute an EngB-type G domain. Residues 29 to 36 (GRSNVGKS), 56 to 60 (GSTRQ), 74 to 77 (DLPG), 141 to 144 (TKID), and 172 to 177 (IIGTSS) each bind GTP. S36 and T58 together coordinate Mg(2+).

This sequence belongs to the TRAFAC class TrmE-Era-EngA-EngB-Septin-like GTPase superfamily. EngB GTPase family. Mg(2+) is required as a cofactor.

Necessary for normal cell division and for the maintenance of normal septation. The sequence is that of Probable GTP-binding protein EngB from Anaplasma marginale (strain Florida).